The primary structure comprises 3326 residues: Protein unc-80 homolog (3326 aa).

Over residues 152–164 (IENQGSPGQPCRS) the composition is skewed to polar residues. 4 disordered regions span residues 152–178 (IENQ…RKTF), 243–267 (KRSS…QQGE), 283–317 (PKAT…RASL), and 450–469 (RKED…GKRR). The residue at position 257 (Ser-257) is a Phosphoserine. Polar residues predominate over residues 283–308 (PKATISGCHQGNSFDGSLSSQTSQER). Residue Ser-526 is modified to Phosphoserine. Disordered regions lie at residues 536-560 (LSAR…SHGE), 697-785 (RKKS…DNIP), 967-1076 (GKKV…SRRI), 1405-1430 (EDSK…KKVP), and 1469-1516 (SSKL…LSNA). 2 stretches are compositionally biased toward basic and acidic residues: residues 551–560 (LPDHSNSHGE) and 699–713 (KSEN…KRPS). Over residues 723–737 (SSSSTSGFGAPSASG) the composition is skewed to low complexity. Residues 738–770 (AGDGGGEEGGGGDGGGGGGGGDGGGGGGGGGGP) show a composition bias toward gly residues. The segment covering 772 to 783 (EKNEKNQEKDDN) has biased composition (basic and acidic residues). Low complexity predominate over residues 1038-1055 (SQSAASDTSSQSEQDTSE). The span at 1418–1429 (IKSDAGAEEKKV) shows a compositional bias: basic and acidic residues. 2 helical membrane-spanning segments follow: residues 2336–2356 (PFVL…DAAN) and 2466–2486 (IAAT…VEVL). The tract at residues 2493-2515 (PQMSRSDQGHKGTTTANHTMSSG) is disordered. The next 2 membrane-spanning stretches (helical) occupy residues 2853–2873 (GLAE…LVCF) and 2899–2919 (LALW…FVLL). The span at 3010–3032 (NTGTGTVWEQDSEPSQQASQDTL) shows a compositional bias: polar residues. The segment at 3010-3052 (NTGTGTVWEQDSEPSQQASQDTLSRTDEEDEENDSVSMPSVVS) is disordered. Phosphoserine is present on Ser-3110. 3 disordered regions span residues 3122 to 3222 (LQQP…VLTS), 3236 to 3271 (PKQS…LSDP), and 3296 to 3326 (NGTE…ESHV). Over residues 3127 to 3136 (GRKRGLRQLR) the composition is skewed to basic residues. Residues 3157 to 3168 (LSTTRRSIQPKT) show a composition bias toward polar residues. Polar residues predominate over residues 3298 to 3309 (TENPLLSSQFTF). A compositionally biased stretch (acidic residues) spans 3315–3326 (GDTDSALDESHV).

The protein belongs to the unc-80 family. As to quaternary structure, NALCN complex consists of NALCN and auxiliary subunits, UNC79, UNC80 and NACL1. These auxiliary subunits are essential for the NALCN complex function. Interacts (via N-terminus half) with NALCN; this interaction facilitates NALCN surface localization. Interacts (via C-terminus) with UNC79. UNC80 bridges NALCN to UNC79. Phosphorylated on tyrosine residues. In terms of tissue distribution, expressed almost exclusively in the brain. Expressed in hippocampus and ventral tegmental area neurons.

Its subcellular location is the cell membrane. It localises to the cell projection. The protein localises to the dendrite. In terms of biological role, auxiliary subunit of the NALCN sodium channel complex. The NALCN sodium channel complex is a voltage-gated ion channel responsible for the resting Na(+) permeability that controls neuronal excitability. This complex is activated by neuropeptides substance P, neurotensin. In addition, the channel is inhibited by extracellular Ca(2+) through the Ca(2+)-sensing receptor. UNC80 is essential for NALCN sensitivity to extracellular calcium. The sequence is that of Protein unc-80 homolog (Unc80) from Mus musculus (Mouse).